We begin with the raw amino-acid sequence, 170 residues long: MAQIRIHEVNTRIENEVKVSKFLQEEGVLYEKWNISKLPPHLNENYSLTDENKAEILAVFSKEIADVSARRGYKAHDVISLSNSTPNLDELLINFQKEHHHTDDEVRFIVSGHGIFAIEGKDGTFFDVELEPGDLISVPENARHYFTLQDDRQVVAIRIFVTTEGWVPIY.

4 residues coordinate Fe(2+): histidine 99, histidine 101, glutamate 105, and histidine 144. Ni(2+) is bound by residues histidine 99, histidine 101, glutamate 105, and histidine 144.

Belongs to the acireductone dioxygenase (ARD) family. As to quaternary structure, monomer. Requires Fe(2+) as cofactor. Ni(2+) is required as a cofactor.

It catalyses the reaction 1,2-dihydroxy-5-(methylsulfanyl)pent-1-en-3-one + O2 = 3-(methylsulfanyl)propanoate + CO + formate + 2 H(+). The enzyme catalyses 1,2-dihydroxy-5-(methylsulfanyl)pent-1-en-3-one + O2 = 4-methylsulfanyl-2-oxobutanoate + formate + 2 H(+). It functions in the pathway amino-acid biosynthesis; L-methionine biosynthesis via salvage pathway; L-methionine from S-methyl-5-thio-alpha-D-ribose 1-phosphate: step 5/6. In terms of biological role, catalyzes 2 different reactions between oxygen and the acireductone 1,2-dihydroxy-3-keto-5-methylthiopentene (DHK-MTPene) depending upon the metal bound in the active site. Fe-containing acireductone dioxygenase (Fe-ARD) produces formate and 2-keto-4-methylthiobutyrate (KMTB), the alpha-ketoacid precursor of methionine in the methionine recycle pathway. Ni-containing acireductone dioxygenase (Ni-ARD) produces methylthiopropionate, carbon monoxide and formate, and does not lie on the methionine recycle pathway. This Bacillus anthracis protein is Acireductone dioxygenase.